Consider the following 629-residue polypeptide: tRNA uridine 5-carboxymethylaminomethyl modification enzyme MnmG (629 aa).

Residues Gly-14–Gly-19, Val-126, and Ser-181 each bind FAD. Position 273–287 (Gly-273–Phe-287) interacts with NAD(+). Gln-370 lines the FAD pocket.

Belongs to the MnmG family. In terms of assembly, homodimer. Heterotetramer of two MnmE and two MnmG subunits. It depends on FAD as a cofactor.

Its subcellular location is the cytoplasm. In terms of biological role, NAD-binding protein involved in the addition of a carboxymethylaminomethyl (cmnm) group at the wobble position (U34) of certain tRNAs, forming tRNA-cmnm(5)s(2)U34. The sequence is that of tRNA uridine 5-carboxymethylaminomethyl modification enzyme MnmG from Bacillus cereus (strain ATCC 14579 / DSM 31 / CCUG 7414 / JCM 2152 / NBRC 15305 / NCIMB 9373 / NCTC 2599 / NRRL B-3711).